Reading from the N-terminus, the 75-residue chain is Psi-conotoxin PIIIE (75 aa).

The first 19 residues, Met-1–Ala-19, serve as a signal peptide directing secretion. Residues Leu-20–Arg-50 constitute a propeptide that is removed on maturation. 4-hydroxyproline is present on residues Pro-52, Pro-53, and Pro-64. Disulfide bonds link Cys-54–Cys-66, Cys-55–Cys-71, and Cys-60–Cys-72. Gly-74 is subject to Glycine amide.

Expressed by the venom duct.

It is found in the secreted. Its function is as follows. Psi-conotoxins act on postsynaptic membranes, and act as non-competitive antagonist of nicotinic acetylcholine receptors (nAChR). Is more toxic than Psi-conotoxin PIIIF. In vivo, has paralytic activity when injected intraperitoneally into goldfish. This Conus purpurascens (Purple cone) protein is Psi-conotoxin PIIIE.